A 139-amino-acid polypeptide reads, in one-letter code: GSK3B-interacting protein (139 aa).

A required for PRKAR2A interaction; contributes to a protective effect against H(2)O(2)-induced apoptosis region spans residues 41 to 45 (VNDVL). The interaction with GSK3B and acts as a GSK3B inhibitor stretch occupies residues 115 to 139 (SPAYREAFGNALLQRLEALKREGQS).

The protein belongs to the GSKIP family. In terms of assembly, forms a complex composed of PRKAR2A or PRKAR2B, GSK3B and GSKIP through GSKIP interaction; facilitates PKA-induced phosphorylation of GSK3B leading to GSK3B inactivation; recruits DNM1L through GSK3B for PKA-mediated phosphorylation of DNM1L; promotes beta-catenin degradation through GSK3B-induced phosphorylation of beta-catenin; stabilizes beta-catenin and enhances Wnt-induced signaling through PKA-induced phosphorylation of beta-catenin. Interacts with GSK3B; induces GSK3B-mediated phosphorylation of GSKIP and inhibits GSK3B kinase activity. Phosphorylated by GSK3B.

It localises to the cytoplasm. It is found in the nucleus. A-kinase anchoring protein for GSK3B and PKA that regulates or facilitates their kinase activity towards their targets. The ternary complex enhances Wnt-induced signaling by facilitating the GSK3B- and PKA-induced phosphorylation of beta-catenin leading to beta-catenin degradation and stabilization respectively. Upon cAMP activation, the ternary complex contributes to neuroprotection against oxidative stress-induced apoptosis by facilitating the PKA-induced phosphorylation of DML1 and PKA-induced inactivation of GSK3B. During neurite outgrowth promotes neuron proliferation; while increases beta-catenin-induced transcriptional activity through GSK3B kinase activity inhibition, reduces N-cadherin level to promote cell cycle progression. May play a role in cleft palate formation and is required for postnatal life through modulation of the activity of GSK3B during development. The sequence is that of GSK3B-interacting protein from Bos taurus (Bovine).